The sequence spans 876 residues: Phosphoenolpyruvate carboxylase (876 aa).

Catalysis depends on residues His-138 and Lys-544.

It belongs to the PEPCase type 1 family. Mg(2+) serves as cofactor.

It catalyses the reaction oxaloacetate + phosphate = phosphoenolpyruvate + hydrogencarbonate. Functionally, forms oxaloacetate, a four-carbon dicarboxylic acid source for the tricarboxylic acid cycle. This is Phosphoenolpyruvate carboxylase from Marinomonas sp. (strain MWYL1).